Reading from the N-terminus, the 188-residue chain is Killer cell lectin-like receptor subfamily G member 1 (188 aa).

Topologically, residues 1-33 (MADSSIYSTLELPEAPQVQDESRWKLKAVLHRP) are cytoplasmic. An ITIM motif motif is present at residues 5–10 (SIYSTL). Residues 34 to 56 (HLSRFAMVALGLLTVILMSLLMY) form a helical; Signal-anchor for type II membrane protein membrane-spanning segment. Residues 57–188 (QRILCCGSKD…LQWICKKVLY (132 aa)) are Extracellular-facing. A disulfide bridge links C75 with C86. Residues N82 and N97 are each glycosylated (N-linked (GlcNAc...) asparagine). A C-type lectin domain is found at 82-184 (NGSHCYYFSM…CEVALQWICK (103 aa)). Intrachain disulfides connect C103–C183 and C162–C175.

Forms a monomer and homodimer; disulfide-linked. Interacts (via ITIM motif) with PTPN11 and INPP5D. Post-translationally, phosphorylated in response to monoclonal antibody G63 binding and antigenic stimulation. As to expression, expressed specifically on natural killer (NK) cells and activated CD8 T-cells. Not detected in spleen, thymus, lymph node, testis, brain or kidney. Not detected on mast cell lines, bone marrow-derived mast cells, or peritoneal mast cells.

Its subcellular location is the cell membrane. Its function is as follows. Plays an inhibitory role on natural killer (NK) cells and T-cell functions upon binding to their non-MHC ligands. May mediate missing self recognition by binding to a highly conserved site on classical cadherins, enabling it to monitor expression of E-cadherin/CDH1, N-cadherin/CDH2 and R-cadherin/CDH4 on target cells. This Mus musculus (Mouse) protein is Killer cell lectin-like receptor subfamily G member 1 (Klrg1).